A 91-amino-acid polypeptide reads, in one-letter code: Pre-early 3 receptor internalization and degradation alpha protein (91 aa).

The Cytoplasmic segment spans residues 1–4 (MIPR). Positions 1 to 22 (MIPRVLILLTLVALFCACSTLA) are cleaved as a propeptide — signal peptide. The helical transmembrane segment at 5 to 25 (VLILLTLVALFCACSTLAAVA) threads the bilayer. Residues 26–34 (HIEVDCIPP) lie on the Lumenal side of the membrane. Residues 35-60 (FTVYLLYGFVTLILICSLVTVVIAFI) traverse the membrane as a helical segment. Residues 61–91 (QFIDWVCVRIAYLRHHPQYRDRTIADLLRIL) are Cytoplasmic-facing.

It belongs to the adenoviridae E3-RID-alpha family. Homodimer with only one chain cleaved by signal peptidase. Interacts with E3 RID-beta and E3 CR1-alpha. In terms of processing, the signal peptide is only cleaved partially by host signal peptidase. This results in two forms of the protein, one uncleaved with two transmembrane regions, and one cleaved with one transmembrane region.

It localises to the host membrane. The protein localises to the host endoplasmic reticulum. Functionally, prevents infected cell apoptosis induced by the host immune system. Acts by down-regulating a number of cell surface receptors in the tumor necrosis factor (TNF) receptor superfamily, namely FAS, TNFRSF10A/TRAIL receptor 1, and TNFRSF10B/TRAIL receptor 2. Down-regulation of these death receptors protects adenovirus-infected cells from apoptosis induced by the death receptor ligands Fas ligand and TRAIL. RID complex also down-regulates certain tyrosine kinase cell surface receptors, especially the epidermal growth factor receptor (EGFR). RID-mediated Fas and EGFR down-regulation occurs via endocytosis of the receptors into endosomes followed by transport to and degradation within lysosomes. The polypeptide is Pre-early 3 receptor internalization and degradation alpha protein (Homo sapiens (Human)).